Consider the following 580-residue polypeptide: Arginine--tRNA ligase (580 aa).

A 'HIGH' region motif is present at residues 131-141; it reads ANPTGPLHVGH.

The protein belongs to the class-I aminoacyl-tRNA synthetase family. In terms of assembly, monomer.

It is found in the cytoplasm. It catalyses the reaction tRNA(Arg) + L-arginine + ATP = L-arginyl-tRNA(Arg) + AMP + diphosphate. The polypeptide is Arginine--tRNA ligase (Ruegeria sp. (strain TM1040) (Silicibacter sp.)).